The primary structure comprises 3375 residues: Basement membrane proteoglycan (3375 aa).

The first 22 residues, 1-22 (MKRSSTVLAALLALLLVATNDA), serve as a signal peptide directing secretion. The Ig-like C2-type 1 domain occupies 45–130 (VQITVFPSEK…NTVEARATLS (86 aa)). 11 disulfides stabilise this stretch: C66/C114, C149/C161, C156/C174, C168/C183, C190/C202, C197/C215, C209/C224, C233/C246, C240/C259, C253/C268, and C293/C344. LDL-receptor class A domains are found at residues 148–184 (QCMA…ANCP), 189–225 (TCEP…LNCN), and 232–269 (DCKP…VGCV). Positions 271 to 355 (PTVVDPPQTN…AINVKGRVLA (85 aa)) constitute an Ig-like C2-type 2 domain. A disordered region spans residues 364–385 (VDDPRPQPPQPPTAPPQRASCD). Pro residues predominate over residues 369-378 (PQPPQPPTAP). Cystine bridges form between C384-C400, C402-C411, and C414-C429. In terms of domain architecture, Laminin EGF-like 1; truncated spans 384-431 (CDTRGAVTPYPNNYGTCECKSQVTGPNCDQCKPGAFHLSEKSPEGCLK). A Laminin EGF-like 2; first part domain is found at 432–441 (CFCFGVSNDC). Residues 450 to 633 (KDRLMFAGDA…PDGLALEVEQ (184 aa)) form the Laminin IV type A 1 domain. 4 disulfide bridges follow: C634-C648, C636-C689, C691-C700, and C703-C718. One can recognise a Laminin EGF-like 2; second part domain in the interval 634–666 (CVCPPGYLGTSCEDCAPGYERSGYGPYLGTCVP). The region spanning 674-720 (CGPGAVAPTAPAQGQCQCKASVIGPNCDRCAPNSFGLAPTNPQGCIP) is the Laminin EGF-like 3; truncated domain. The Laminin EGF-like 4; first part domain maps to 721–730 (CFCSGVTQQC). The 182-residue stretch at 740–921 (VSIDYARGDR…QGLTAAEVEQ (182 aa)) folds into the Laminin IV type A 2 domain. Residues 922–954 (CICPPGYVGTSCEDCAPGYSRTGGGLYLGLCEK) enclose the Laminin EGF-like 4; second part domain. Disulfide bonds link C955/C964, C957/C971, C974/C983, C986/C1002, C1011/C1021, C1013/C1027, C1030/C1039, C1042/C1058, C1061/C1069, C1063/C1079, C1082/C1091, C1094/C1109, C1152/C1200, C1247/C1294, and C1338/C1384. Laminin EGF-like domains lie at 955–1004 (CECN…DCQP), 1011–1060 (CHCN…DCTP), and 1061–1111 (CPCP…VCEP). Ig-like C2-type domains lie at 1126–1222 (PHEV…KRIS), 1226–1311 (PQPV…AVLE), 1319–1401 (PKVD…EPVQ), 1410–1499 (PQRG…ARLN), 1503–1585 (PQAI…RPVE), 1588–1680 (PARV…TPAT), 1690–1785 (PQVE…STLN), 1793–1878 (PRPV…VRLE), 1886–1970 (PTAV…GNVN), 1973–2069 (PSLT…IYIE), 2073–2163 (PSRI…AVHV), 2173–2260 (PKVE…TAVS), 2263–2343 (QQDK…GFVT), 2349–2435 (PDTI…RTVL), and 2446–2530 (TFTV…VDLQ). Polar residues predominate over residues 1388-1400 (DPSDNTPLQSEPV). Disordered regions lie at residues 1388–1426 (DPSD…QTVN) and 1478–1497 (EYEC…PPAR). Residue N1422 is glycosylated (N-linked (GlcNAc...) asparagine). Disulfide bonds link C1435-C1481, C1527-C1573, C1618-C1663, and C1719-C1767. Residues 1481-1497 (CTSTEPDGSTQLSPPAR) are compositionally biased toward polar residues. The disordered stretch occupies residues 1773–1792 (NSPPVKTNPSTLNVTPEGTP). Polar residues predominate over residues 1776–1788 (PVKTNPSTLNVTP). Intrachain disulfides connect C1814-C1861, C1907-C1954, C1998-C2053, C2099-C2147, C2195-C2242, C2284-C2329, C2374-C2420, C2467-C2514, C2713-C2725, C2719-C2736, C2738-C2747, C2754-C2764, C2759-C2773, C2775-C2784, and C2935-C2960. Residues 1880–1918 (TEDQEPPTAVVEPRTWNGKPGERHQFRCITTGSPTPKIT) are disordered. Positions 1907 to 1918 (CITTGSPTPKIT) are enriched in polar residues. N2476 is a glycosylation site (N-linked (GlcNAc...) asparagine). A Laminin G-like 1 domain is found at 2532–2713 (DDFIPVIDGE…PSSVVKYDAC (182 aa)). Residues 2793–2960 (PLGFTSDTSF…LSSSGDISSC (168 aa)) form the Laminin G-like 2 domain. Residue N2950 is glycosylated (N-linked (GlcNAc...) asparagine). The segment covering 2952 to 2963 (SSSGDISSCEES) has biased composition (low complexity). Residues 2952 to 3124 (SSSGDISSCE…GTLPPDSSSE (173 aa)) form a disordered region. Composition is skewed to acidic residues over residues 2979–2990 (EEPEAVIEEPTT) and 2999–3010 (PITEEPTEEPTT). Residues 3011–3033 (TEEPTTTEEPTTTTEEPTTTTTE) show a composition bias toward low complexity. Residues 3034 to 3044 (EPYHIYETSRD) are compositionally biased toward basic and acidic residues. The span at 3049-3079 (IIIPVETTTTSTTTTSTTEEPEAEPALVLPT) shows a compositional bias: low complexity. Acidic residues predominate over residues 3081–3094 (PVEENDVSDEEEEI). 4 cysteine pairs are disulfide-bonded: C3141/C3152, C3146/C3162, C3164/C3173, and C3333/C3359. N-linked (GlcNAc...) asparagine glycans are attached at residues N3143 and N3156. Positions 3180–3359 (EHAARFDGDA…AIDGKNVKPC (180 aa)) constitute a Laminin G-like 3 domain.

In terms of assembly, component of an integrin containing attachment complex, composed of at least pat-2, pat-3, pat-4, pat-6, unc-52, unc-97 and unc-112. Detected on embryonic and adult body wall muscle cells (at protein level). Found in the basement membrane of all contractile tissues (at protein level). Expressed in gonadal sheath cells and spermatheca.

It localises to the secreted. The protein localises to the extracellular space. It is found in the extracellular matrix. Its subcellular location is the basement membrane. The protein resides in the cytoplasm. It localises to the myofibril. The protein localises to the sarcomere. It is found in the m line. In terms of biological role, component of an integrin containing attachment complex, which is required for muscle development and maintenance. Probable structural role in myofilament assembly and/or attachment of the myofilament lattice to the cell membrane. May be an extracellular anchor for integrin receptors in body wall muscles and myoepithelial sheath cells. During the formation of neuromuscular junctions at the larval stage, negatively regulates membrane protrusion from body wall muscles, probably downstream of the integrin complex formed by pat-2 and pat-3. Involved in ovulation. Required for normal lifespan. The protein is Basement membrane proteoglycan of Caenorhabditis elegans.